The chain runs to 429 residues: Serine--tRNA ligase (429 aa).

L-serine is bound at residue 235 to 237; sequence TAE. 266–268 provides a ligand contact to ATP; sequence RSE. Glu289 contributes to the L-serine binding site. 353-356 provides a ligand contact to ATP; the sequence is EISS. Ser389 is an L-serine binding site.

Belongs to the class-II aminoacyl-tRNA synthetase family. Type-1 seryl-tRNA synthetase subfamily. Homodimer. The tRNA molecule binds across the dimer.

Its subcellular location is the cytoplasm. It catalyses the reaction tRNA(Ser) + L-serine + ATP = L-seryl-tRNA(Ser) + AMP + diphosphate + H(+). It carries out the reaction tRNA(Sec) + L-serine + ATP = L-seryl-tRNA(Sec) + AMP + diphosphate + H(+). The protein operates within aminoacyl-tRNA biosynthesis; selenocysteinyl-tRNA(Sec) biosynthesis; L-seryl-tRNA(Sec) from L-serine and tRNA(Sec): step 1/1. Catalyzes the attachment of serine to tRNA(Ser). Is also able to aminoacylate tRNA(Sec) with serine, to form the misacylated tRNA L-seryl-tRNA(Sec), which will be further converted into selenocysteinyl-tRNA(Sec). In Histophilus somni (strain 129Pt) (Haemophilus somnus), this protein is Serine--tRNA ligase.